A 258-amino-acid polypeptide reads, in one-letter code: Flagellar brake protein YcgR (258 aa).

Residues 131 to 248 enclose the PilZ domain; the sequence is QKREYYRVAT…ALSLIQRYIT (118 aa).

This sequence belongs to the YcgR family. Monomer. Interacts with the flagellar basal bodies.

The protein resides in the bacterial flagellum basal body. Functionally, acts as a flagellar brake, regulating swimming and swarming in a bis-(3'-5') cyclic diguanylic acid (c-di-GMP)-dependent manner. Binds 1 c-di-GMP dimer per subunit. Increasing levels of c-di-GMP lead to decreased motility. This Nitrosospira multiformis (strain ATCC 25196 / NCIMB 11849 / C 71) protein is Flagellar brake protein YcgR.